The chain runs to 130 residues: Fumarate reductase subunit C (130 aa).

A run of 3 helical transmembrane segments spans residues 34-54 (VPAVWFSIVLIYGVFALKGGV), 60-80 (FVGFLQNPLVLLINFVALLAA), and 109-129 (IVKTLWAVTVVASVVILAVAL).

The protein belongs to the FrdC family. In terms of assembly, part of an enzyme complex containing four subunits: a flavoprotein (FrdA), an iron-sulfur protein (FrdB), and two hydrophobic anchor proteins (FrdC and FrdD).

It localises to the cell inner membrane. Functionally, two distinct, membrane-bound, FAD-containing enzymes are responsible for the catalysis of fumarate and succinate interconversion; fumarate reductase is used in anaerobic growth, and succinate dehydrogenase is used in aerobic growth. Anchors the catalytic components of the fumarate reductase complex to the cell inner membrane, binds quinones. This is Fumarate reductase subunit C from Serratia proteamaculans (strain 568).